Here is a 595-residue protein sequence, read N- to C-terminus: DNA primase (595 aa).

The segment at 38 to 62 (CPFHQEKTPSFTVSDSKRFFYCFGC) adopts a CHC2-type zinc-finger fold. Positions 250 to 332 (NHSILVEGYF…EKKISFIRLP (83 aa)) constitute a Toprim domain. Residues Glu-256, Asp-300, and Asp-302 each coordinate Mg(2+).

Belongs to the DnaG primase family. In terms of assembly, monomer. Interacts with DnaB. It depends on Zn(2+) as a cofactor. The cofactor is Mg(2+).

The catalysed reaction is ssDNA + n NTP = ssDNA/pppN(pN)n-1 hybrid + (n-1) diphosphate.. Its function is as follows. RNA polymerase that catalyzes the synthesis of short RNA molecules used as primers for DNA polymerase during DNA replication. The polypeptide is DNA primase (Rickettsia felis (strain ATCC VR-1525 / URRWXCal2) (Rickettsia azadi)).